The sequence spans 103 residues: Pilin (103 aa).

The N-terminal stretch at 1–30 is a signal peptide; the sequence is MYRFACRTLMLAACILATGVAGLGVGAQSA. Over residues 61-76 the composition is skewed to basic and acidic residues; that stretch reads HDDFHRDSDGPDHSRD. Residues 61 to 103 form a disordered region; it reads HDDFHRDSDGPDHSRDYPGPILEGPVLDDPGAAPPPPAAGGGA. Positions 92 to 103 are enriched in pro residues; the sequence is AAPPPPAAGGGA.

This sequence belongs to the mycobacterial pilin family. In terms of assembly, forms a homomer composed of subunits assembled in a large structure.

It localises to the fimbrium. Functionally, structural subunit of pili, which are thin, flexible, coiled-coil, aggregative fibers. Mediates adhesion to the extracellular matrix, an event that would facilitate direct interaction with the host epithelium during infection in the lung or other tissues. The chain is Pilin (mtp) from Mycobacterium bovis (strain ATCC BAA-935 / AF2122/97).